Reading from the N-terminus, the 89-residue chain is Small ribosomal subunit protein uS17 (89 aa).

The protein belongs to the universal ribosomal protein uS17 family. Part of the 30S ribosomal subunit.

In terms of biological role, one of the primary rRNA binding proteins, it binds specifically to the 5'-end of 16S ribosomal RNA. This chain is Small ribosomal subunit protein uS17, found in Lactiplantibacillus plantarum (strain ATCC BAA-793 / NCIMB 8826 / WCFS1) (Lactobacillus plantarum).